The chain runs to 287 residues: UPF0761 membrane protein MS0032 (287 aa).

The next 6 helical transmembrane spans lie at 37–57 (MLAIVPLVMVVFAIFSAFPMF), 93–113 (SMSAVGIISLIAVALLLINQI), 128–148 (FIFSMTIYWTLLTLGPIFIGM), 174–194 (LLSFVPFLLTWLSFSLIYTLV), 204–224 (AAVGALVAAIFFTLGKKAFAW), and 238–258 (AMATLPITLLWIQLSWLFILL).

Belongs to the UPF0761 family.

The protein localises to the cell inner membrane. The polypeptide is UPF0761 membrane protein MS0032 (Mannheimia succiniciproducens (strain KCTC 0769BP / MBEL55E)).